We begin with the raw amino-acid sequence, 430 residues long: MNIAVVGLSHKTAPVEVREKLSIQEAKIEEALTHLKGYPHIEEVAVISTCNRLEIYAVVTDTEKGVVEITQFLSEIGHIPLSYLRRYLFTLLHQDAVRHLLRVAAGLESLVLGEGQILAQVKTTHKLSQKYKGIGRLLDRLFKQAITAGKRVRSETNIGTGAVSISSAAVELAITKVDDLATRNISIIGAGKMACLLVKHLVAKGATSITIVNRSQRRAEELAKKFPQAELTLVSLDEMMSVVGKSHLVFTSTGATEPILHQDNLREVVSAEQGLMLFDISVPRNVATNVQDLEIVEAYNVDDLKAVVAQNHASRRQMALEAEGLLEEEVEAFELWWRSLETVPTISCLRTKVESIREQELEKALSRLGTEFAEKHQEVIEALTRGIVNKILHEPMVQLRAQQDIEARQRCLQSLQMLFDLEIEIEKQFS.

Residues 49–52 (TCNR), Ser-109, 114–116 (EGQ), and Gln-120 contribute to the substrate site. Residue Cys-50 is the Nucleophile of the active site. An NADP(+)-binding site is contributed by 189 to 194 (GAGKMA).

Belongs to the glutamyl-tRNA reductase family. As to quaternary structure, homodimer.

The enzyme catalyses (S)-4-amino-5-oxopentanoate + tRNA(Glu) + NADP(+) = L-glutamyl-tRNA(Glu) + NADPH + H(+). Its pathway is porphyrin-containing compound metabolism; protoporphyrin-IX biosynthesis; 5-aminolevulinate from L-glutamyl-tRNA(Glu): step 1/2. The protein operates within porphyrin-containing compound metabolism; chlorophyll biosynthesis. In terms of biological role, catalyzes the NADPH-dependent reduction of glutamyl-tRNA(Glu) to glutamate 1-semialdehyde (GSA). The protein is Glutamyl-tRNA reductase of Crocosphaera subtropica (strain ATCC 51142 / BH68) (Cyanothece sp. (strain ATCC 51142)).